The sequence spans 468 residues: Lactate utilization protein B (468 aa).

2 consecutive 4Fe-4S ferredoxin-type domains span residues 303-333 and 352-381; these read GTQF…GHAY and YENY…LHEL. [4Fe-4S] cluster contacts are provided by cysteine 312, cysteine 315, cysteine 318, cysteine 322, cysteine 365, cysteine 368, and cysteine 372. The disordered stretch occupies residues 442-468; sequence PAWTDSKDLPQPNKQTVRDWFKKRGNA. Residues 457-468 are compositionally biased toward basic and acidic residues; the sequence is TVRDWFKKRGNA.

This sequence belongs to the LutB/YkgF family.

Its function is as follows. Is involved in L-lactate degradation and allows cells to grow with lactate as the sole carbon source. Has probably a role as an electron transporter during oxidation of L-lactate. The protein is Lactate utilization protein B of Exiguobacterium sp. (strain ATCC BAA-1283 / AT1b).